Consider the following 3075-residue polypeptide: Laminin subunit alpha-1 (3075 aa).

Positions 1-17 are cleaved as a signal peptide; sequence MRGGVLLVLLLCVAAQC. One can recognise a Laminin N-terminal domain in the interval 18-269; that stretch reads RQRGLFPAIL…SIKDISVGGM (252 aa). 16 cysteine pairs are disulfide-bonded: Cys-270/Cys-279, Cys-272/Cys-290, Cys-292/Cys-301, Cys-304/Cys-324, Cys-327/Cys-336, Cys-329/Cys-361, Cys-364/Cys-373, Cys-376/Cys-394, Cys-397/Cys-409, Cys-399/Cys-427, Cys-429/Cys-438, Cys-441/Cys-451, Cys-454/Cys-467, Cys-456/Cys-471, Cys-473/Cys-482, and Cys-485/Cys-500. Laminin EGF-like domains lie at 270–326, 327–396, 397–453, and 454–502; these read CICY…TCEA, CNCH…PCRP, CNCD…TCVS, and CGCN…GCSE. A Laminin EGF-like 5; first part domain is found at 503 to 512; the sequence is CFCFGVSDVC. Residues 516 to 708 form the Laminin IV type A 1 domain; the sequence is SWPVGQVNSM…DLVVAADVEH (193 aa). N-linked (GlcNAc...) asparagine glycosylation is present at Asn-665. Residues 709 to 741 enclose the Laminin EGF-like 5; second part domain; that stretch reads CECPQGYTGTSCESCLSGYYRVDGILFGGICQP. 32 disulfide bridges follow: Cys-742–Cys-751, Cys-744–Cys-757, Cys-760–Cys-769, Cys-772–Cys-788, Cys-791–Cys-806, Cys-793–Cys-816, Cys-819–Cys-828, Cys-831–Cys-846, Cys-849–Cys-863, Cys-851–Cys-870, Cys-873–Cys-882, Cys-885–Cys-899, Cys-902–Cys-914, Cys-904–Cys-921, Cys-923–Cys-932, Cys-935–Cys-948, Cys-951–Cys-963, Cys-953–Cys-969, Cys-971–Cys-980, Cys-983–Cys-995, Cys-998–Cys-1007, Cys-1000–Cys-1014, Cys-1016–Cys-1025, Cys-1028–Cys-1041, Cys-1044–Cys-1056, Cys-1046–Cys-1063, Cys-1065–Cys-1074, Cys-1077–Cys-1087, Cys-1090–Cys-1102, Cys-1092–Cys-1118, Cys-1120–Cys-1129, and Cys-1132–Cys-1147. Laminin EGF-like domains lie at 742 to 790, 791 to 848, 849 to 901, 902 to 950, 951 to 997, 998 to 1043, 1044 to 1089, and 1090 to 1149; these read CECH…DCQP, CACP…SCVP, CDCS…NCRA, CECH…GCRP, CNCS…SCTP, CDCP…GCQA, CNCS…DCVP, and CDCD…GCSP. In terms of domain architecture, Laminin EGF-like 14; first part spans 1150-1159; sequence CFCSGLSHLC. Residues 1170–1361 form the Laminin IV type A 2 domain; it reads VTLGSDQPLL…EEEVASLLEN (192 aa). The 41-residue stretch at 1362–1402 folds into the Laminin EGF-like 14; second part domain; that stretch reads CVCPPGTVGFSCQDCAPGYHRGKLPAGSDRGPRPLVAPCVP. Cystine bridges form between Cys-1403–Cys-1412, Cys-1405–Cys-1419, Cys-1422–Cys-1431, Cys-1434–Cys-1449, Cys-1452–Cys-1466, Cys-1454–Cys-1476, Cys-1479–Cys-1488, Cys-1491–Cys-1506, Cys-1509–Cys-1521, Cys-1511–Cys-1528, Cys-1530–Cys-1539, and Cys-1542–Cys-1553. Laminin EGF-like domains follow at residues 1403–1451, 1452–1508, and 1509–1555; these read CSCN…DCAL, CACP…SCQK, and CDCN…DCVS. Residues 1556–2116 form a domain II and I region; sequence CDDECVGVLL…SQARKQAASI (561 aa). Asn-1579, Asn-1689, Asn-1717, Asn-2047, and Asn-2243 each carry an N-linked (GlcNAc...) asparagine glycan. Positions 1706–1783 form a coiled coil; that stretch reads MQIRDFTQLH…KMQESNHLLL (78 aa). 5 consecutive Laminin G-like domains span residues 2117–2297, 2305–2481, 2486–2673, 2713–2885, and 2890–3070; these read KVAV…CRGC, DPSF…RKGC, IRSV…LDTC, AHQF…VNRC, and QEGT…LHSC. 2 disulfides stabilise this stretch: Cys-2271/Cys-2297 and Cys-2457/Cys-2481. The Cell attachment site signature appears at 2534 to 2536; sequence RGD. 3 cysteine pairs are disulfide-bonded: Cys-2646-Cys-2673, Cys-2860-Cys-2885, and Cys-3039-Cys-3070.

As to quaternary structure, laminin is a complex glycoprotein, consisting of three different polypeptide chains (alpha, beta, gamma), which are bound to each other by disulfide bonds into a cross-shaped molecule comprising one long and three short arms with globules at each end. Alpha-1 is a subunit of laminin-1 (laminin-111 or EHS laminin) and laminin-3 (laminin-121 or S-laminin). In terms of processing, tyrosine phosphorylated by PKDCC/VLK.

It localises to the secreted. Its subcellular location is the extracellular space. It is found in the extracellular matrix. The protein localises to the basement membrane. Binding to cells via a high affinity receptor, laminin is thought to mediate the attachment, migration and organization of cells into tissues during embryonic development by interacting with other extracellular matrix components. This is Laminin subunit alpha-1 (LAMA1) from Homo sapiens (Human).